A 310-amino-acid polypeptide reads, in one-letter code: Small ribosomal subunit biogenesis GTPase RsgA 2 (310 aa).

Residues 77–238 (LSKQSHILAA…IIDTPGIKGF (162 aa)) form the CP-type G domain. Residues 126 to 129 (NKVD) and 180 to 188 (GHSGVGKST) each bind GTP. Zn(2+)-binding residues include cysteine 262, cysteine 267, histidine 269, and cysteine 275.

It belongs to the TRAFAC class YlqF/YawG GTPase family. RsgA subfamily. As to quaternary structure, monomer. Associates with 30S ribosomal subunit, binds 16S rRNA. It depends on Zn(2+) as a cofactor.

It localises to the cytoplasm. Functionally, one of several proteins that assist in the late maturation steps of the functional core of the 30S ribosomal subunit. Helps release RbfA from mature subunits. May play a role in the assembly of ribosomal proteins into the subunit. Circularly permuted GTPase that catalyzes slow GTP hydrolysis, GTPase activity is stimulated by the 30S ribosomal subunit. In Bacteroides thetaiotaomicron (strain ATCC 29148 / DSM 2079 / JCM 5827 / CCUG 10774 / NCTC 10582 / VPI-5482 / E50), this protein is Small ribosomal subunit biogenesis GTPase RsgA 2.